Here is a 280-residue protein sequence, read N- to C-terminus: MVSSTRSEHSFAGVGGVRIVYDVWTPDTDPRGVVVLAHGYAEHAGRYHHVAQRFGAAGLLVYALDHRGHGRSGGKRVHLRDLSEFVEDFRTLVGIAANDHPTLPRIVLGHSMGGGIVFAYGARYPGEYSAMVLSGPAVNAHDGVSPVLVAVAKVLGKLAPGIPVENLDADAVSRDPEVVAAYKADPMVHHGKLPAGIARALIGLGQSMPQRAAALTAPLLVVHGDKDRLIPVAGSRLLVDRVASEDVHLKVYPGLYHEVFNEPEQKLVLDDVTSWIVSHL.

Ser-111 serves as the catalytic Nucleophile. Catalysis depends on charge relay system residues Asp-227 and His-257.

The protein belongs to the AB hydrolase superfamily.

Its subcellular location is the secreted. It is found in the cell wall. The enzyme catalyses Hydrolyzes glycerol monoesters of long-chain fatty acids.. In terms of biological role, contributes to cell growth, probably by hydrolyzing exogenous lipids. Catalyzes the hydrolysis of monoacylglycerols (MAG) with fatty acid chains ranging from C14 to C18, with a maximum activity on monoolein. Is unable to hydrolyze long-chain diacylglycerol (DAG). This chain is Monoacylglycerol lipase, found in Mycolicibacterium smegmatis (strain ATCC 700084 / mc(2)155) (Mycobacterium smegmatis).